We begin with the raw amino-acid sequence, 340 residues long: Mitochondrial calcium uniporter regulator 1 (340 aa).

The interval 1–44 (MDSGSVAAERPRRTPSRQRLPSSGCGVPARPGVSTLPGGRSWLR) is disordered. The Mitochondrial intermembrane segment spans residues 1-54 (MDSGSVAAERPRRTPSRQRLPSSGCGVPARPGVSTLPGGRSWLRPRGRAARASP). A helical transmembrane segment spans residues 55-74 (LLFLLLVPSPRLAATATATA). The Mitochondrial matrix portion of the chain corresponds to 75–316 (PRRTLAERSR…KTMLEAHKLD (242 aa)). Residues 197–291 (ALQQVLSKIA…VSLHAQQDRA (95 aa)) adopt a coiled-coil conformation. Position 204 is an N6-acetyllysine (lysine 204). A helical membrane pass occupies residues 317-339 (TIKYLAGSVFTCLTVALGFYRLW). Isoleucine 340 is a topological domain (mitochondrial intermembrane).

This sequence belongs to the CCDC90 family. As to quaternary structure, interacts (via coiled coil regions) with MCU; the interaction is direct. Interacts with SMDT1/EMRE; the interaction is direct. Interacts with PPIF.

The protein localises to the mitochondrion inner membrane. In terms of biological role, key regulator of mitochondrial calcium uniporter (MCU) required for calcium entry into mitochondrion. Plays a direct role in uniporter-mediated calcium uptake via a direct interaction with MCU. Probably involved in the assembly of the membrane components of the uniporter complex (uniplex). This is Mitochondrial calcium uniporter regulator 1 from Mus musculus (Mouse).